Here is a 296-residue protein sequence, read N- to C-terminus: Endochitinase 3 (296 aa).

The GH18 domain maps to 12–296 (HKLTVYWGAE…VKNGQLPEED (285 aa)). N-linked (GlcNAc...) asparagine glycosylation is found at Asn32 and Asn152. The Proton donor role is filled by Glu153. Asn228 carries an N-linked (GlcNAc...) asparagine glycan.

It belongs to the glycosyl hydrolase 18 family. Chitinase class III subfamily.

The protein localises to the secreted. The enzyme catalyses Random endo-hydrolysis of N-acetyl-beta-D-glucosaminide (1-&gt;4)-beta-linkages in chitin and chitodextrins.. Its function is as follows. Secreted chitinase involved in the degradation of chitin, a component of the cell walls of fungi and exoskeletal elements of some animals (including worms and arthropods). Participates in the infection process and directly acts in the penetration process of the host cuticle. Involved in heat-shock adaptation. The protein is Endochitinase 3 (chi3) of Metarhizium anisopliae (Entomophthora anisopliae).